The primary structure comprises 198 residues: Secreted RxLR effector protein PITG_22926 (198 aa).

An N-terminal signal peptide occupies residues 1 to 20 (MLRSFLLIVATVSLFGQCKP). The RxLR-dEER signature appears at 43-52 (RFLRTNDEER).

This sequence belongs to the RxLR effector family. As to quaternary structure, interacts with host MAP3Kbeta2 in the nucleoplasm.

Its subcellular location is the secreted. The protein localises to the host nucleus. The protein resides in the host nucleolus. In terms of biological role, secreted effector that promotes P.infestans colonization of plant host. Specifically suppresses Avr4/Cf4- and AvrPto/Pto-triggered cell death. Targets the potato MAP3Kbeta2 kinase, a positive regulator of cell death associated with plant immunity, and perturbs signaling pathways triggered by MAP3Kbeta2. The protein is Secreted RxLR effector protein PITG_22926 of Phytophthora infestans (strain T30-4) (Potato late blight agent).